Here is a 441-residue protein sequence, read N- to C-terminus: Serine carboxypeptidase-like 3 (441 aa).

The signal sequence occupies residues 1–30 (MASNYVFSVLRSLLLLIHTVFLGQHHVSSA). 3 disulfide bridges follow: Cys-88–Cys-331, Cys-252–Cys-266, and Cys-290–Cys-297. N-linked (GlcNAc...) asparagine glycosylation occurs at Asn-109. Ser-184 is an active-site residue. The N-linked (GlcNAc...) asparagine glycan is linked to Asn-350. Residue Asp-366 is part of the active site. N-linked (GlcNAc...) asparagine glycosylation occurs at Asn-382. His-419 is an active-site residue.

Belongs to the peptidase S10 family. As to expression, expressed in roots.

Its subcellular location is the secreted. Probable carboxypeptidase. The chain is Serine carboxypeptidase-like 3 (SCPL3) from Arabidopsis thaliana (Mouse-ear cress).